Reading from the N-terminus, the 386-residue chain is Eukaryotic translation initiation factor 3 subunit M (386 aa).

One can recognise a PCI domain in the interval 181 to 343; that stretch reads NSELASKVMI…RKVHISSTMH (163 aa).

Belongs to the eIF-3 subunit M family. Component of the eukaryotic translation initiation factor 3 (eIF-3) complex.

It localises to the cytoplasm. Functionally, component of the eukaryotic translation initiation factor 3 (eIF-3) complex, which is involved in protein synthesis of a specialized repertoire of mRNAs and, together with other initiation factors, stimulates binding of mRNA and methionyl-tRNAi to the 40S ribosome. The eIF-3 complex specifically targets and initiates translation of a subset of mRNAs involved in cell proliferation. The protein is Eukaryotic translation initiation factor 3 subunit M of Aedes aegypti (Yellowfever mosquito).